The sequence spans 60 residues: L-amino-acid oxidase (60 aa).

1–4 lines the FAD pocket; the sequence is GPMR. Residue Arg-4 participates in substrate binding.

This sequence belongs to the flavin monoamine oxidase family. FIG1 subfamily. As to quaternary structure, homodimer; non-covalently linked. FAD serves as cofactor. Contains 2 disulfide bonds. Post-translationally, N-glycosylated. In terms of tissue distribution, expressed by the venom gland.

It is found in the secreted. The catalysed reaction is an L-alpha-amino acid + O2 + H2O = a 2-oxocarboxylate + H2O2 + NH4(+). In terms of biological role, catalyzes an oxidative deamination of predominantly hydrophobic and aromatic L-amino acids, thus producing hydrogen peroxide that may contribute to the diverse toxic effects of this enzyme. Exhibits diverse biological activities, such as hemorrhage, hemolysis, edema, apoptosis of vascular endothelial cells or tumor cell lines, antibacterial and antiparasitic activities, as well as regulation of platelet aggregation. Effects of snake L-amino oxidases on platelets are controversial, since they either induce aggregation or inhibit agonist-induced aggregation. These different effects are probably due to different experimental conditions. In Bitis gabonica (Gaboon adder), this protein is L-amino-acid oxidase.